The chain runs to 126 residues: Small ribosomal subunit protein uS13 (126 aa).

The segment at 94 to 126 (RNLPVHGQRTHTNARTRKGPRRAIAGKKKAGKK) is disordered.

It belongs to the universal ribosomal protein uS13 family. Part of the 30S ribosomal subunit. Forms a loose heterodimer with protein S19. Forms two bridges to the 50S subunit in the 70S ribosome.

Located at the top of the head of the 30S subunit, it contacts several helices of the 16S rRNA. In the 70S ribosome it contacts the 23S rRNA (bridge B1a) and protein L5 of the 50S subunit (bridge B1b), connecting the 2 subunits; these bridges are implicated in subunit movement. Contacts the tRNAs in the A and P-sites. The polypeptide is Small ribosomal subunit protein uS13 (Parafrankia sp. (strain EAN1pec)).